The sequence spans 496 residues: Probable glycine dehydrogenase (decarboxylating) subunit 2 (496 aa).

The residue at position 265 (Lys-265) is an N6-(pyridoxal phosphate)lysine.

This sequence belongs to the GcvP family. C-terminal subunit subfamily. In terms of assembly, the glycine cleavage system is composed of four proteins: P, T, L and H. In this organism, the P 'protein' is a heterodimer of two subunits. Requires pyridoxal 5'-phosphate as cofactor.

The catalysed reaction is N(6)-[(R)-lipoyl]-L-lysyl-[glycine-cleavage complex H protein] + glycine + H(+) = N(6)-[(R)-S(8)-aminomethyldihydrolipoyl]-L-lysyl-[glycine-cleavage complex H protein] + CO2. The glycine cleavage system catalyzes the degradation of glycine. The P protein binds the alpha-amino group of glycine through its pyridoxal phosphate cofactor; CO(2) is released and the remaining methylamine moiety is then transferred to the lipoamide cofactor of the H protein. In Thioalkalivibrio sulfidiphilus (strain HL-EbGR7), this protein is Probable glycine dehydrogenase (decarboxylating) subunit 2.